The following is a 420-amino-acid chain: UDP-glucuronic acid decarboxylase 1 (420 aa).

Residue M1 is modified to N-acetylmethionine. The Cytoplasmic segment spans residues 1–19 (MVSKALLRLVSAVNRRRMK). A helical; Signal-anchor for type II membrane protein transmembrane segment spans residues 20 to 40 (LLLGIALLAYVASVWGNFVNM). Residues 41-420 (RSIQENGELK…RIKKGRTRHN (380 aa)) lie on the Lumenal side of the membrane. Phosphothreonine is present on T94. 10 residues coordinate NAD(+): G98, F99, V100, D119, N120, F122, T123, G124, D144, and V145. 2 residues coordinate UDP-alpha-D-glucuronate: L149 and Y150. Residues L159 and S161 each contribute to the NAD(+) site. UDP-alpha-D-glucuronate is bound at residue K177. Residue T178 participates in NAD(+) binding. UDP-alpha-D-glucuronate is bound by residues N185, G188, K191, and R192. NAD(+) is bound by residues A200, Y231, and K235. The active-site Proton acceptor is Y231. 3 residues coordinate UDP-alpha-D-glucuronate: Y245, Q248, and E249. Positions 261, 267, and 272 each coordinate NAD(+). Residue N316 is glycosylated (N-linked (GlcNAc...) asparagine).

This sequence belongs to the NAD(P)-dependent epimerase/dehydratase family. UDP-glucuronic acid decarboxylase subfamily. In terms of assembly, homodimer and homotetramer. Interacts with AKT1. It depends on NAD(+) as a cofactor.

It localises to the golgi apparatus. Its subcellular location is the golgi stack membrane. The catalysed reaction is UDP-alpha-D-glucuronate + H(+) = UDP-alpha-D-xylose + CO2. It participates in nucleotide-sugar biosynthesis; UDP-alpha-D-xylose biosynthesis; UDP-alpha-D-xylose from UDP-alpha-D-glucuronate: step 1/1. Its function is as follows. Catalyzes the NAD-dependent decarboxylation of UDP-glucuronic acid to UDP-xylose. Necessary for the biosynthesis of the core tetrasaccharide in glycosaminoglycan biosynthesis. The polypeptide is UDP-glucuronic acid decarboxylase 1 (UXS1) (Pongo abelii (Sumatran orangutan)).